We begin with the raw amino-acid sequence, 338 residues long: 1-aminocyclopropane-1-carboxylate deaminase (338 aa).

K51 carries the N6-(pyridoxal phosphate)lysine modification. The active-site Nucleophile is the S78.

This sequence belongs to the ACC deaminase/D-cysteine desulfhydrase family. Homotrimer. It depends on pyridoxal 5'-phosphate as a cofactor.

It carries out the reaction 1-aminocyclopropane-1-carboxylate + H2O = 2-oxobutanoate + NH4(+). Its function is as follows. Catalyzes a cyclopropane ring-opening reaction, the irreversible conversion of 1-aminocyclopropane-1-carboxylate (ACC) to ammonia and alpha-ketobutyrate. Allows growth on ACC as a nitrogen source. The chain is 1-aminocyclopropane-1-carboxylate deaminase from Burkholderia pseudomallei (strain 1710b).